The primary structure comprises 211 residues: Large ribosomal subunit protein mL48 (211 aa).

A mitochondrion-targeting transit peptide spans 1 to 27 (MSGTLGKVLGVWTNTVSKQGFSLLRFR). Residue lysine 198 is modified to N6-succinyllysine.

Belongs to the mitochondrion-specific ribosomal protein mL48 family. In terms of assembly, component of the mitochondrial ribosome large subunit (39S) which comprises a 16S rRNA and about 50 distinct proteins. Interacts with OXA1L.

Its subcellular location is the mitochondrion. The polypeptide is Large ribosomal subunit protein mL48 (Mrpl48) (Mus musculus (Mouse)).